Consider the following 292-residue polypeptide: ATP synthase gamma chain (292 aa).

It belongs to the ATPase gamma chain family. In terms of assembly, F-type ATPases have 2 components, CF(1) - the catalytic core - and CF(0) - the membrane proton channel. CF(1) has five subunits: alpha(3), beta(3), gamma(1), delta(1), epsilon(1). CF(0) has three main subunits: a, b and c.

It localises to the cell membrane. In terms of biological role, produces ATP from ADP in the presence of a proton gradient across the membrane. The gamma chain is believed to be important in regulating ATPase activity and the flow of protons through the CF(0) complex. This chain is ATP synthase gamma chain, found in Caldicellulosiruptor saccharolyticus (strain ATCC 43494 / DSM 8903 / Tp8T 6331).